A 107-amino-acid polypeptide reads, in one-letter code: U1-lycotoxin-Ls1b (107 aa).

A signal peptide spans 1-20 (MMKVLVVVALLVTLISYSSS). A propeptide spanning residues 21-41 (EGIDDLEADELLSLMANEQTR) is cleaved from the precursor. 4 cysteine pairs are disulfide-bonded: cysteine 44–cysteine 59, cysteine 51–cysteine 68, cysteine 58–cysteine 86, and cysteine 70–cysteine 84.

The protein belongs to the neurotoxin 19 (CSTX) family. 04 (U1-Lctx) subfamily. Expressed by the venom gland.

It is found in the secreted. The sequence is that of U1-lycotoxin-Ls1b from Lycosa singoriensis (Wolf spider).